The chain runs to 88 residues: Small ribosomal subunit protein uS15 (88 aa).

Belongs to the universal ribosomal protein uS15 family. As to quaternary structure, part of the 30S ribosomal subunit. Forms a bridge to the 50S subunit in the 70S ribosome, contacting the 23S rRNA.

In terms of biological role, one of the primary rRNA binding proteins, it binds directly to 16S rRNA where it helps nucleate assembly of the platform of the 30S subunit by binding and bridging several RNA helices of the 16S rRNA. Its function is as follows. Forms an intersubunit bridge (bridge B4) with the 23S rRNA of the 50S subunit in the ribosome. The protein is Small ribosomal subunit protein uS15 of Caldanaerobacter subterraneus subsp. tengcongensis (strain DSM 15242 / JCM 11007 / NBRC 100824 / MB4) (Thermoanaerobacter tengcongensis).